A 157-amino-acid chain; its full sequence is UPF0262 protein Avi_0642 (157 aa).

This sequence belongs to the UPF0262 family.

The protein is UPF0262 protein Avi_0642 of Allorhizobium ampelinum (strain ATCC BAA-846 / DSM 112012 / S4) (Agrobacterium vitis (strain S4)).